The sequence spans 307 residues: N-acetylglucosamine-1-phosphotransferase subunit gamma (307 aa).

The signal sequence occupies residues 1–24 (MAGRLAGFLMLLGLASQGPAPAYA). The MRH domain occupies 69-171 (GKCFSLVEST…TFETPLVCHP (103 aa)). A disulfide bridge links cysteine 71 with cysteine 84. N-linked (GlcNAc...) asparagine glycans are attached at residues asparagine 88 and asparagine 115. 2 cysteine pairs are disulfide-bonded: cysteine 129-cysteine 157 and cysteine 142-cysteine 169. Residues 176–279 (VYPTLSEALQ…HTQPTETTHS (104 aa)) enclose the DMAP1-binding domain.

In terms of assembly, homodimer; disulfide-linked. Hexamer of two alpha (GNPTAB), two beta (GNPTAB) and two gamma (GNPTG) subunits; disulfide-linked. The alpha and/or the beta subunits of the enzyme constitute the catalytic subunits. Cys-245 mediates the formation of the interchain disulfide bond for formation of the homodimer. Cys-142, Cys-157 and Cys-169 are involved in intramolecular disulfide bonds formation. Widely expressed. Highly expressed in the liver, intestine, brain, thymus, testis and ovary.

Its subcellular location is the secreted. It is found in the golgi apparatus. Non-catalytic subunit of the N-acetylglucosamine-1-phosphotransferase complex, an enzyme that catalyzes the formation of mannose 6-phosphate (M6P) markers on high mannose type oligosaccharides in the Golgi apparatus. Binds and presents the high mannose glycans of the acceptor to the catalytic alpha and beta subunits (GNPTAB). Enhances the rate of N-acetylglucosamine-1-phosphate transfer to the oligosaccharides of acid hydrolase acceptors. This chain is N-acetylglucosamine-1-phosphotransferase subunit gamma (Gnptg), found in Mus musculus (Mouse).